A 94-amino-acid polypeptide reads, in one-letter code: Co-chaperonin GroES (94 aa).

Belongs to the GroES chaperonin family. As to quaternary structure, heptamer of 7 subunits arranged in a ring. Interacts with the chaperonin GroEL.

The protein localises to the cytoplasm. In terms of biological role, together with the chaperonin GroEL, plays an essential role in assisting protein folding. The GroEL-GroES system forms a nano-cage that allows encapsulation of the non-native substrate proteins and provides a physical environment optimized to promote and accelerate protein folding. GroES binds to the apical surface of the GroEL ring, thereby capping the opening of the GroEL channel. The chain is Co-chaperonin GroES from Streptococcus agalactiae serotype III (strain NEM316).